Here is a 353-residue protein sequence, read N- to C-terminus: ATP-dependent kinase YFH7 (353 aa).

31-39 (GSPGSGKST) lines the ATP pocket.

This sequence belongs to the YFH7 family.

In terms of biological role, ATP-dependent kinase that could be involved in endoplasmic reticulum membrane assembly. The chain is ATP-dependent kinase YFH7 (YFH7) from Saccharomyces cerevisiae (strain RM11-1a) (Baker's yeast).